Consider the following 570-residue polypeptide: Sulfite reductase [NADPH] hemoprotein beta-component (570 aa).

Positions 434, 440, 479, and 483 each coordinate [4Fe-4S] cluster. Siroheme is bound at residue cysteine 483.

Belongs to the nitrite and sulfite reductase 4Fe-4S domain family. As to quaternary structure, alpha(8)-beta(8). The alpha component is a flavoprotein, the beta component is a hemoprotein. Siroheme serves as cofactor. Requires [4Fe-4S] cluster as cofactor.

It carries out the reaction hydrogen sulfide + 3 NADP(+) + 3 H2O = sulfite + 3 NADPH + 4 H(+). Its pathway is sulfur metabolism; hydrogen sulfide biosynthesis; hydrogen sulfide from sulfite (NADPH route): step 1/1. Its function is as follows. Component of the sulfite reductase complex that catalyzes the 6-electron reduction of sulfite to sulfide. This is one of several activities required for the biosynthesis of L-cysteine from sulfate. In Escherichia coli (strain ATCC 8739 / DSM 1576 / NBRC 3972 / NCIMB 8545 / WDCM 00012 / Crooks), this protein is Sulfite reductase [NADPH] hemoprotein beta-component.